We begin with the raw amino-acid sequence, 362 residues long: Mitochondrial glycine transporter (362 aa).

Solcar repeat units follow at residues 22–108 (PDAT…MRTS), 132–236 (LTAM…FKND), and 269–354 (RSSI…LIKS). A run of 6 helical transmembrane segments spans residues 28–53 (LLAGAIAGLVSAVTLQPFDLLKTRLQ), 83–109 (GTLPSTLRTSIGAGLYFTTLSKMRTSW), 138–163 (LTTGFIARGIVGYITMPITIIKTRFE), 211–234 (GSVATLARDCPYAGLYVLTYEAFK), 273–299 (INSTAAVLAASTCTTITAPFDAIKTRL), and 329–347 (GLSLRLGRKGISAGISWCI).

Belongs to the mitochondrial carrier (TC 2.A.29) family. SLC25A38 subfamily.

Its subcellular location is the mitochondrion inner membrane. The enzyme catalyses glycine(in) = glycine(out). Its function is as follows. Mitochondrial glycine transporter that imports glycine into the mitochondrial matrix. Plays an important role in providing glycine for the first enzymatic step in heme biosynthesis, the condensation of glycine with succinyl-CoA to produce 5-aminolevulinate (ALA) in the mitochondrial matrix. The sequence is that of Mitochondrial glycine transporter from Candida albicans (strain SC5314 / ATCC MYA-2876) (Yeast).